A 406-amino-acid polypeptide reads, in one-letter code: 8-amino-7-oxononanoate synthase (406 aa).

R21 is a binding site for substrate. 112–113 (GY) is a pyridoxal 5'-phosphate binding site. Residue H137 participates in substrate binding. Pyridoxal 5'-phosphate is bound by residues S183, H211, and T239. K242 is subject to N6-(pyridoxal phosphate)lysine. Residue T358 coordinates substrate.

The protein belongs to the class-II pyridoxal-phosphate-dependent aminotransferase family. BioF subfamily. As to quaternary structure, homodimer. The cofactor is pyridoxal 5'-phosphate.

The catalysed reaction is 6-carboxyhexanoyl-[ACP] + L-alanine + H(+) = (8S)-8-amino-7-oxononanoate + holo-[ACP] + CO2. It functions in the pathway cofactor biosynthesis; biotin biosynthesis. Functionally, catalyzes the decarboxylative condensation of pimeloyl-[acyl-carrier protein] and L-alanine to produce 8-amino-7-oxononanoate (AON), [acyl-carrier protein], and carbon dioxide. In Burkholderia orbicola (strain MC0-3), this protein is 8-amino-7-oxononanoate synthase.